A 145-amino-acid chain; its full sequence is Superoxide dismutase [Mn/Fe] (145 aa).

Residues His10 and His64 each contribute to the Fe(3+) site. Mn(2+) is bound by residues His10 and His64. Residues 126–145 are disordered; it reads TSTANQDTPISEGKKPILGL.

This sequence belongs to the iron/manganese superoxide dismutase family. Mn(2+) serves as cofactor. Fe(3+) is required as a cofactor.

The enzyme catalyses 2 superoxide + 2 H(+) = H2O2 + O2. Functionally, destroys superoxide anion radicals which are normally produced within the cells and which are toxic to biological systems. Catalyzes the dismutation of superoxide anion radicals into O2 and H2O2 by successive reduction and oxidation of the transition metal ion at the active site. The protein is Superoxide dismutase [Mn/Fe] (sodA) of Streptococcus mitis.